Reading from the N-terminus, the 445-residue chain is Phosphoglucosamine mutase (445 aa).

The active-site Phosphoserine intermediate is S99. The Mg(2+) site is built by S99, D242, D244, and D246. S99 carries the phosphoserine modification.

This sequence belongs to the phosphohexose mutase family. The cofactor is Mg(2+). Post-translationally, activated by phosphorylation.

It carries out the reaction alpha-D-glucosamine 1-phosphate = D-glucosamine 6-phosphate. In terms of biological role, catalyzes the conversion of glucosamine-6-phosphate to glucosamine-1-phosphate. This chain is Phosphoglucosamine mutase, found in Helicobacter pylori (strain Shi470).